The sequence spans 651 residues: 120 kDa Glycoprotein O (651 aa).

A signal peptide spans 1–56 (MHLEVIVQSYKKSKYYFSHTFYLYKFIVVNSPDMLHISRLGLFLGLFAIVMHSVNL). Residues Asn74, Asn97, Asn147, Asn208, Asn223, Asn234, and Asn254 are each glycosylated (N-linked (GlcNAc...) asparagine; by host). Residues 275-292 (SSTSASLTSPHIPSTNIP) are compositionally biased toward low complexity. The segment at 275-303 (SSTSASLTSPHIPSTNIPTPAPPPVTKNS) is disordered. Asn302, Asn355, Asn378, Asn395, Asn469, Asn502, Asn520, Asn546, Asn603, Asn620, and Asn631 each carry an N-linked (GlcNAc...) asparagine; by host glycan.

This sequence belongs to the herpesviridae U47 family. As to quaternary structure, part of a gH-gL-gO complex. In terms of processing, a shorter mature protein, gO-80K, is produced probably by proteolytic cleavage. Post-translationally, modified with high mannose-oligosaccharides. N-glycosylated with complex glycans.

It is found in the virion. The protein resides in the host cell membrane. The chain is 120 kDa Glycoprotein O (U47) from Human herpesvirus 6A (strain Uganda-1102) (HHV-6 variant A).